The sequence spans 1763 residues: Genome polyprotein (1763 aa).

The region spanning 458–614 (DGVITSCNKR…ESHKRARPGT (157 aa)) is the SF3 helicase domain. 484-491 (GPPGCGKT) lines the ATP pocket. Positions 981-986 (DDEYDE) are acidic. Y984 is subject to O-(5'-phospho-RNA)-tyrosine. Phosphothreonine is present on T1040. S1067 is modified (phosphoserine). The 157-residue stretch at 1073-1229 (GPGTKFHKNA…KLVVPYVHID (157 aa)) folds into the Peptidase C24 domain. Catalysis depends on for 3CLpro activity residues H1110, E1131, and C1193. The region spanning 1478 to 1603 (AKVFAVDYSK…MFPIMYASIS (126 aa)) is the RdRp catalytic domain.

Homodimer. Interacts with NTPase, protein p30 and protease-polymerase p76. In terms of assembly, interacts with capsid protein VP1 and protease-polymerase p76. Interacts with host IEF4e; this interaction plays a role in translation of viral proteins. As to quaternary structure, homooligomer. Interacts with Vpg, protein p32 and may interact with capsid protein VP1. Specific enzymatic cleavages in vivo yield mature proteins. Pro-Pol is first autocatalytically cleaved, then processes the whole polyprotein. Post-translationally, VPg is uridylylated by the polymerase and is covalently attached to the 5'-end of the polyadenylated genomic and subgenomic RNAs. This uridylylated form acts as a nucleotide-peptide primer for the polymerase.

The protein resides in the host endoplasmic reticulum membrane. The enzyme catalyses a ribonucleoside 5'-triphosphate + H2O = a ribonucleoside 5'-diphosphate + phosphate + H(+). It carries out the reaction RNA(n) + a ribonucleoside 5'-triphosphate = RNA(n+1) + diphosphate. The catalysed reaction is Endopeptidase with a preference for cleavage when the P1 position is occupied by Glu-|-Xaa and the P1' position is occupied by Gly-|-Yaa.. In terms of biological role, together with NTPase and NS4, initiates the formation of the replication complex. Induces the proliferation of the host smooth ER membranes forming long tubular structures. These remodeled membranes probably form the viral factories that contain the replication complex. Functionally, displays NTPase activity, but no helicase activity. Induces the formation of convoluted membranes derived from the host ER. These remodeled membranes probably form the viral factories that contain the replication complex. Together with NS2 and NS4, initiates the formation of the replication complex. Probable key protein responsible for the formation of membrane alterations by the virus. Induces the formation of convoluted membranes derived from the host ER. These remodeled membranes probably form the viral factories that contain the replication complex. Together with NS2 and NTPase, initiates the formation of the replication complex. Its function is as follows. Viral genome-linked protein is covalently linked to the 5'-end of the positive-strand, negative-strand genomic RNAs and subgenomic RNA. Acts as a genome-linked replication primer. May recruit ribosome to viral RNA thereby promoting viral proteins translation. Interacts with host translation initiation complex to allow the translation of viral proteins. In terms of biological role, protease-polymerase p76 processes the polyprotein: Pro-Pol is first released by autocleavage, then all other proteins are cleaved. Cleaves host translation initiation factor eIF4G1, eIF4G2 and PABP1 thereby inducing a shutdown of host protein synthesis. This shutdown may not prevent viral mRNA from being translated since viral Vpg replaces the cap. It is also an RNA-directed RNA polymerase which replicates genomic and antigenomic viral RNA by recognizing specific signals. Also transcribes a subgenomic mRNA by initiating RNA synthesis internally on antigenomic RNA. This sgRNA codes for structural proteins. Catalyzes the covalent attachment VPg with viral RNAs. Cleaves host G3BP1 thereby preventing the assembly of host stress granules. The protein is Genome polyprotein of Felidae (cat family).